The chain runs to 133 residues: Phosphomevalonate dehydratase small subunit (133 aa).

The active-site Proton acceptor is Ser-62.

Belongs to the AcnX type II small subunit family. As to quaternary structure, heterodimer composed of a large subunit (PMDh-L) and a small subunit (PMDh-S).

It catalyses the reaction (R)-5-phosphomevalonate = (2E)-3-methyl-5-phosphooxypent-2-enoate + H2O. It participates in isoprenoid biosynthesis; isopentenyl diphosphate biosynthesis via mevalonate pathway. Component of a hydro-lyase that catalyzes the dehydration of mevalonate 5-phosphate (MVA5P) to form trans-anhydromevalonate 5-phosphate (tAHMP). Involved in the archaeal mevalonate (MVA) pathway, which provides fundamental precursors for isoprenoid biosynthesis, such as isopentenyl diphosphate (IPP) and dimethylallyl diphosphate (DMAPP). The chain is Phosphomevalonate dehydratase small subunit from Thermococcus kodakarensis (strain ATCC BAA-918 / JCM 12380 / KOD1) (Pyrococcus kodakaraensis (strain KOD1)).